A 190-amino-acid chain; its full sequence is Probable nicotinate-nucleotide adenylyltransferase (190 aa).

It belongs to the NadD family.

It carries out the reaction nicotinate beta-D-ribonucleotide + ATP + H(+) = deamido-NAD(+) + diphosphate. The protein operates within cofactor biosynthesis; NAD(+) biosynthesis; deamido-NAD(+) from nicotinate D-ribonucleotide: step 1/1. In terms of biological role, catalyzes the reversible adenylation of nicotinate mononucleotide (NaMN) to nicotinic acid adenine dinucleotide (NaAD). The polypeptide is Probable nicotinate-nucleotide adenylyltransferase (Frankia alni (strain DSM 45986 / CECT 9034 / ACN14a)).